Consider the following 243-residue polypeptide: Myrosinase MB2 (243 aa).

N-linked (GlcNAc...) asparagine glycosylation is present at asparagine 30. Tyrosine 51 contacts substrate. The active-site Nucleophile is glutamate 125. Residues tryptophan 173 and 180–181 each bind substrate; that span reads EF. A glycan (N-linked (GlcNAc...) asparagine) is linked at asparagine 216.

Belongs to the glycosyl hydrolase 1 family. As to quaternary structure, homodimer. As to expression, in vacuoles called myrosin grains of a certain class of cells, myrosin cells, distributed in the cotyledons and the axis of the embryo as well as in different organs of the growing plant.

The protein localises to the vacuole. The catalysed reaction is a thioglucoside + H2O = a sugar + a thiol.. In terms of biological role, degradation of glucosinolates (glucose residue linked by a thioglucoside bound to an amino acid derivative) to glucose, sulfate and any of the products: thiocyanates, isothiocyanates, nitriles, epithionitriles or oxazolidine-2-thiones. This Sinapis alba (White mustard) protein is Myrosinase MB2.